An 839-amino-acid polypeptide reads, in one-letter code: MEPNIYQLALAALFGASFVAVSGFFMHFKALNLVLERGKERKENPDGDEPQNPTLVRRRSQVRRKVNDQYGRSPASLPDATPFTDGGGGGGGDTGRSNGHVYVDEIPPGLPRLHTPSEGRASVHGASSIRKTGSFVRPISPKSPVASASAFESVEESDDDDNLTNSEGLDASYLQANGDNEMPADANEEQISMAASSMIRSHSVSGDLHGVQPDPIAADILRKEPEQETFVRLNVPLEVPTSDEVEAYKCLQECLELRKRYVFQETVAPWEKEVISDPSTPKPNTEPFAHYPQGKSDHCFEMQDGVVHVFANKDAKEDLFPVADATAFFTDLHHVLKVIAAGNIRTLCHRRLVLLEQKFNLHLMLNADKEFLAQKSAPHRDFYNVRKVDTHVHHSACMNQKHLLRFIKSKLRKEPDEVVIFRDGTYLTLREVFESLDLTGYDLNVDLLDVHADKSTFHRFDKFNLKYNPCGQSRLREIFLKQDNLIQGRFLGEITKQVFSDLEASKYQMAEYRISIYGRKMSEWDQLASWIVNNDLYSENVVWLIQLPRLYNIYKDMGIVTSFQNILDNIFIPLFEATVDPDSHPQLHVFLKQVVGFDLVDDESKPERRPTKHMPTPAQWTNAFNPAFSYYVYYCYANLYVLNKLRESKGMTTITLRPHSGEAGDIDHLAATFLTCHSIAHGINLRKSPVLQYLYYLAQIGLAMSPLSNNSLFLDYHRNPFPVFFLRGLNVSLSTDDPLQIHLTKEPLVEEYSIAASVWKLSACDLCEIARNSVYQSGFSHALKSHWIGKDYYKRGPDGNDIHKTNVPHIRVEFRDTIWKEEMQQVYLGKAVISDEVVP.

A helical membrane pass occupies residues 8-28 (LALAALFGASFVAVSGFFMHF). Residues 40–167 (ERKENPDGDE…DDDDNLTNSE (128 aa)) form a disordered region. The span at 85–94 (DGGGGGGGDT) shows a compositional bias: gly residues. Phosphoserine occurs at positions 134 and 140. Residues 153 to 162 (SVEESDDDDN) are compositionally biased toward acidic residues. Ser-203 is subject to Phosphoserine. 289 to 296 (AHYPQGKS) lines the ATP pocket. Residues His-391 and His-393 each contribute to the Zn(2+) site. Residues His-393 and 462-467 (KFNLKY) contribute to the substrate site. His-659 lines the Zn(2+) pocket. Residue Glu-662 participates in substrate binding. His-681 functions as the Proton acceptor in the catalytic mechanism. A Zn(2+)-binding site is contributed by Asp-736. Position 737–740 (737–740 (DPLQ)) interacts with substrate.

The protein belongs to the metallo-dependent hydrolases superfamily. Adenosine and AMP deaminases family. In terms of assembly, homodimer. Interacts with AHK4. Interacts with EER5. Zn(2+) serves as cofactor. As to expression, expressed in seedlings, roots, leaves, flowers, pollen grains, pollen tubes and siliques, and at a lower level in stems.

It is found in the membrane. Its subcellular location is the microsome membrane. It catalyses the reaction AMP + H2O + H(+) = IMP + NH4(+). It participates in purine metabolism; IMP biosynthesis via salvage pathway; IMP from AMP: step 1/1. With respect to regulation, activated by ATP. Activated by sulfate ions (in vitro). Inhibited by phosphate ions. In terms of biological role, AMP deaminase plays a critical role in energy metabolism. Essential for the transition from zygote to embryo. The sequence is that of AMP deaminase from Arabidopsis thaliana (Mouse-ear cress).